The following is a 161-amino-acid chain: Insulin-like growth factor 1, juvenile form (161 aa).

Residues 45–73 (GPETLCGAELVDTLQFVCGDRGFYFSKPT) are b. 3 disulfides stabilise this stretch: cysteine 50–cysteine 92, cysteine 62–cysteine 105, and cysteine 91–cysteine 96. Positions 74 to 85 (GYGPSSRRSHNR) are c. The interval 86–106 (GIVDECCFQSCELRRLEMYCA) is a. The tract at residues 107-114 (PVKPGKTP) is d. Positions 111 to 161 (GKTPRSVRAQRHTDSPRTAKKPLPGQSHSSYKEVHQKNSSRGNTGGRNYRI) are disordered. Residues 115 to 161 (RSVRAQRHTDSPRTAKKPLPGQSHSSYKEVHQKNSSRGNTGGRNYRI) constitute a propeptide, e peptide.

It belongs to the insulin family.

It is found in the secreted. Functionally, the insulin-like growth factors, isolated from plasma, are structurally and functionally related to insulin but have a much higher growth-promoting activity. Acts as a ligand for IGF1R. Binds to the alpha subunit of IGF1R, leading to the activation of the intrinsic tyrosine kinase activity which autophosphorylates tyrosine residues in the beta subunit thus initiatiating a cascade of down-stream signaling events leading to activation of the PI3K-AKT/PKB and the Ras-MAPK pathways. Binds to integrins. Its binding to integrins and subsequent ternary complex formation with integrins and IGFR1 are essential for IGF1 signaling. The chain is Insulin-like growth factor 1, juvenile form from Cyprinus carpio (Common carp).